The chain runs to 141 residues: Large ribosomal subunit protein uL11 (141 aa).

It belongs to the universal ribosomal protein uL11 family. As to quaternary structure, part of the ribosomal stalk of the 50S ribosomal subunit. Interacts with L10 and the large rRNA to form the base of the stalk. L10 forms an elongated spine to which L12 dimers bind in a sequential fashion forming a multimeric L10(L12)X complex. In terms of processing, one or more lysine residues are methylated.

Forms part of the ribosomal stalk which helps the ribosome interact with GTP-bound translation factors. The protein is Large ribosomal subunit protein uL11 of Selenomonas ruminantium.